A 707-amino-acid polypeptide reads, in one-letter code: Leucine-rich repeat neuronal protein 3 (707 aa).

An N-terminal signal peptide occupies residues 1-22 (MKDTPLQVHVLLGLAITTLVQA). The LRRNT domain occupies 23-69 (IDKKVDCPQLCTCEIRPWFTPRSIYMEASTVDCNDLGLLNFPARLPA). Over 23 to 626 (IDKKVDCPQL…DGKEYGKNHT (604 aa)) the chain is Extracellular. 12 LRR repeats span residues 70–91 (DTQILLLQTNNIARIEHSTDFP), 93–114 (NLTGLDLSQNNLSSVTNINVQK), 117–138 (QLLSVYLEENKLTELPEKCLYG), 141–162 (NLQELYVNHNLLSTISPGAFIG), 165–186 (NLLRLHLNSNRLQMINSQWFDA), 189–210 (NLEILMLGDNPIIRIKDMNFQP), 213–234 (KLRSLVIAGINLTEIPDDALAG), 237–258 (NLESISFYDNRLSKVPQVALQK), 261–282 (NLKFLDLNKNPINRIRRGDFSN), 285–304 (HLKELGINNMPELVSIDSLA), 310–332 (DLRKIEATNNPRLSYIHPNAFFR), and 335–358 (KLESLMLNTNALSALYHGTIESLP). Asparagine 93 and asparagine 103 each carry an N-linked (GlcNAc...) asparagine glycan. The N-linked (GlcNAc...) asparagine glycan is linked to asparagine 223. The LRRCT domain occupies 368–421 (NPIRCDCVIRWINMNKTNIRFMEPDSLFCVDPPEFQGQNVRQVHFRDMMEICLP). N-linked (GlcNAc...) asparagine glycosylation is present at asparagine 382. An Ig-like C2-type domain is found at 421–514 (PLIAPESFPS…DLKSIMIKVG (94 aa)). Cysteine 444 and cysteine 496 are disulfide-bonded. Residues asparagine 522, asparagine 579, asparagine 608, and asparagine 624 are each glycosylated (N-linked (GlcNAc...) asparagine). Residues 523–614 (GSLNIKIRDI…QCVNVTTKSL (92 aa)) form the Fibronectin type-III domain. A helical transmembrane segment spans residues 627–647 (VFVACVGGLLGIIGVMCLFSC). Residues 648 to 707 (VSQEGSSEGEHSYAVNHCHKPALAFSELYPPLINLWESSKEKRATLEVKATAIGVPTNMS) lie on the Cytoplasmic side of the membrane.

In terms of tissue distribution, expressed in the brain, in Stronger expression in the ventricular zone and anlage of thalamus, spinal cord, and dorsal root ganglion in 11-17 dpc cerebellum and cerebral cortex in adults.

It localises to the membrane. The protein is Leucine-rich repeat neuronal protein 3 (Lrrn3) of Mus musculus (Mouse).